The sequence spans 716 residues: Hepatocyte growth factor-like protein (716 aa).

Positions 1–18 (MGWLPLLLLLVQCSRALG) are cleaved as a signal peptide. Positions 19–105 (QRSPLNDFQL…SLCHLFQKKD (87 aa)) constitute a PAN domain. Disulfide bonds link C56–C78, C60–C66, C110–C186, C131–C169, C157–C181, C191–C268, C194–C333, C212–C251, C240–C263, C292–C370, C313–C352, C341–C364, C379–C457, C400–C440, C428–C452, C477–C593, C512–C528, C607–C672, C637–C651, and C662–C690. Residue N72 is glycosylated (N-linked (GlcNAc...) asparagine). 4 consecutive Kringle domains span residues 110 to 186 (CIMD…IKTC), 191 to 268 (CVLC…LPSC), 292 to 370 (CFRG…IPRC), and 379 to 457 (CYHG…LQRC). A glycan (N-linked (GlcNAc...) asparagine) is linked at N173. Residue N305 is glycosylated (N-linked (GlcNAc...) asparagine). The region spanning 489–714 (VVGGHPGNSP…FVDWINKVMQ (226 aa)) is the Peptidase S1 domain. N-linked (GlcNAc...) asparagine glycosylation occurs at N620.

The protein belongs to the peptidase S1 family. Plasminogen subfamily. As to quaternary structure, dimer of an alpha chain and a beta chain linked by a disulfide bond. Interacts (via beta chain) with MST1R (via SEMA domain). In terms of processing, cleaved after Arg-488, probably by HPN/Hepsin, to yield the active form consisting of two disulfide-linked chains. As to expression, liver. Lower levels in lung, placenta and adrenal.

Its subcellular location is the secreted. This is Hepatocyte growth factor-like protein (Mst1) from Mus musculus (Mouse).